The chain runs to 332 residues: Fructose-1,6-bisphosphatase class 1 (332 aa).

Mg(2+) is bound by residues glutamate 89, aspartate 110, leucine 112, and aspartate 113. Residues aspartate 113–serine 116, asparagine 206, tyrosine 239, tyrosine 257–tyrosine 259, and lysine 269 contribute to the substrate site. Glutamate 275 contributes to the Mg(2+) binding site.

This sequence belongs to the FBPase class 1 family. Homotetramer. Requires Mg(2+) as cofactor.

Its subcellular location is the cytoplasm. The catalysed reaction is beta-D-fructose 1,6-bisphosphate + H2O = beta-D-fructose 6-phosphate + phosphate. The protein operates within carbohydrate biosynthesis; gluconeogenesis. The chain is Fructose-1,6-bisphosphatase class 1 from Escherichia coli O157:H7.